Reading from the N-terminus, the 357-residue chain is Histidinol-phosphate aminotransferase 1 (357 aa).

Lysine 210 bears the N6-(pyridoxal phosphate)lysine mark.

This sequence belongs to the class-II pyridoxal-phosphate-dependent aminotransferase family. Histidinol-phosphate aminotransferase subfamily. In terms of assembly, homodimer. The cofactor is pyridoxal 5'-phosphate.

The enzyme catalyses L-histidinol phosphate + 2-oxoglutarate = 3-(imidazol-4-yl)-2-oxopropyl phosphate + L-glutamate. Its pathway is amino-acid biosynthesis; L-histidine biosynthesis; L-histidine from 5-phospho-alpha-D-ribose 1-diphosphate: step 7/9. In Methylococcus capsulatus (strain ATCC 33009 / NCIMB 11132 / Bath), this protein is Histidinol-phosphate aminotransferase 1.